The primary structure comprises 690 residues: Elongation factor G (690 aa).

The region spanning 8–283 (EDYRNFGIMA…AVVDYLPSPV (276 aa)) is the tr-type G domain. GTP-binding positions include 17 to 24 (AHIDAGKT), 81 to 85 (DTPGH), and 135 to 138 (NKMD).

The protein belongs to the TRAFAC class translation factor GTPase superfamily. Classic translation factor GTPase family. EF-G/EF-2 subfamily.

It is found in the cytoplasm. Catalyzes the GTP-dependent ribosomal translocation step during translation elongation. During this step, the ribosome changes from the pre-translocational (PRE) to the post-translocational (POST) state as the newly formed A-site-bound peptidyl-tRNA and P-site-bound deacylated tRNA move to the P and E sites, respectively. Catalyzes the coordinated movement of the two tRNA molecules, the mRNA and conformational changes in the ribosome. In Rhodopseudomonas palustris (strain BisA53), this protein is Elongation factor G.